The sequence spans 876 residues: Valine--tRNA ligase (876 aa).

Positions 44–54 match the 'HIGH' region motif; the sequence is PNVTGKLHLGH. The 'KMSKS' region signature appears at 520–524; it reads KMSKS. Lys523 contributes to the ATP binding site. Residues 805–876 are a coiled coil; the sequence is LEGLIDMDKE…VKNRIEQLKA (72 aa).

This sequence belongs to the class-I aminoacyl-tRNA synthetase family. ValS type 1 subfamily. In terms of assembly, monomer.

It is found in the cytoplasm. The catalysed reaction is tRNA(Val) + L-valine + ATP = L-valyl-tRNA(Val) + AMP + diphosphate. In terms of biological role, catalyzes the attachment of valine to tRNA(Val). As ValRS can inadvertently accommodate and process structurally similar amino acids such as threonine, to avoid such errors, it has a 'posttransfer' editing activity that hydrolyzes mischarged Thr-tRNA(Val) in a tRNA-dependent manner. The sequence is that of Valine--tRNA ligase from Staphylococcus haemolyticus (strain JCSC1435).